The primary structure comprises 273 residues: NADPH-dependent 7-cyano-7-deazaguanine reductase (273 aa).

Val-81–Ser-83 is a binding site for substrate. Ser-83–Lys-84 is an NADPH binding site. Catalysis depends on Cys-179, which acts as the Thioimide intermediate. Catalysis depends on Asp-186, which acts as the Proton donor. Ala-218–Glu-219 provides a ligand contact to substrate. Arg-247–Gly-248 provides a ligand contact to NADPH.

This sequence belongs to the GTP cyclohydrolase I family. QueF type 2 subfamily. As to quaternary structure, homodimer.

It localises to the cytoplasm. It carries out the reaction 7-aminomethyl-7-carbaguanine + 2 NADP(+) = 7-cyano-7-deazaguanine + 2 NADPH + 3 H(+). Its pathway is tRNA modification; tRNA-queuosine biosynthesis. Its function is as follows. Catalyzes the NADPH-dependent reduction of 7-cyano-7-deazaguanine (preQ0) to 7-aminomethyl-7-deazaguanine (preQ1). This Rickettsia felis (strain ATCC VR-1525 / URRWXCal2) (Rickettsia azadi) protein is NADPH-dependent 7-cyano-7-deazaguanine reductase.